A 187-amino-acid chain; its full sequence is Adenine phosphoribosyltransferase (187 aa).

Residue 133-137 (ATGGS) participates in AMP binding.

This sequence belongs to the purine/pyrimidine phosphoribosyltransferase family. As to quaternary structure, homodimer. Mg(2+) serves as cofactor.

It localises to the cytoplasm. Its subcellular location is the nucleus. The catalysed reaction is AMP + diphosphate = 5-phospho-alpha-D-ribose 1-diphosphate + adenine. It participates in purine metabolism; AMP biosynthesis via salvage pathway; AMP from adenine: step 1/1. Its function is as follows. Catalyzes a salvage reaction resulting in the formation of AMP, that is energically less costly than de novo synthesis. In Eremothecium gossypii (strain ATCC 10895 / CBS 109.51 / FGSC 9923 / NRRL Y-1056) (Yeast), this protein is Adenine phosphoribosyltransferase (APT1).